We begin with the raw amino-acid sequence, 448 residues long: Eukaryotic translation initiation factor 3 subunit E (448 aa).

One can recognise a PCI domain in the interval 254-423; it reads TDLFFSPAYI…GTVIMNHPPQ (170 aa).

It belongs to the eIF-3 subunit E family. Component of the eukaryotic translation initiation factor 3 (eIF-3) complex.

It is found in the cytoplasm. In terms of biological role, component of the eukaryotic translation initiation factor 3 (eIF-3) complex, which is involved in protein synthesis of a specialized repertoire of mRNAs and, together with other initiation factors, stimulates binding of mRNA and methionyl-tRNAi to the 40S ribosome. The eIF-3 complex specifically targets and initiates translation of a subset of mRNAs involved in cell proliferation. The protein is Eukaryotic translation initiation factor 3 subunit E (int6) of Emericella nidulans (strain FGSC A4 / ATCC 38163 / CBS 112.46 / NRRL 194 / M139) (Aspergillus nidulans).